Consider the following 859-residue polypeptide: Protein O-mannosyl-transferase Tmtc1 (859 aa).

Residues 1–22 (MHTPKCRRPSMSATLSHKDLAG) are Cytoplasmic-facing. The helical transmembrane segment at 23–43 (LAGCSALAFVLYLNTLNAGFV) threads the bilayer. Over 44–103 (YDDRRAILANGDVTGARPLANLLRNDFWGTPLVDSGSHGSWRPLCVLSFRLNYLAGGMTP) the chain is Extracellular. A helical membrane pass occupies residues 104-124 (LGYHLVNVMLHCVATWLVFLV). At 125–134 (ARTLLPSRMG) the chain is on the cytoplasmic side. 2 helical membrane-spanning segments follow: residues 135–154 (VLAA…AVAG) and 155–174 (LVGR…YLSY). Residues 175-189 (RRHMLNREWGSLILT) lie on the Cytoplasmic side of the membrane. A helical transmembrane segment spans residues 190-210 (IMLALAALLCKETAITALLLC). At 211 to 245 (GLCDVLSPVGRENSDKVCDGSISGLASFNFQRRFR) the chain is on the extracellular side. The helical transmembrane segment at 246 to 266 (SLSILGFTLLCGLYCRLSLLP) threads the bilayer. The Cytoplasmic segment spans residues 267-288 (RPSTAFSAADNPTAHESCFWTR). A helical transmembrane segment spans residues 289–309 (TLTFLYLPVANFGILLWPQEL). The Extracellular segment spans residues 310 to 328 (SFDWGMEAVSRIRTLWDAR). The chain crosses the membrane as a helical span at residues 329 to 349 (NILTAGFYGSLVAILWKGSGL). At 350-422 (RSAASPMDFA…SWTAAPILGT (73 aa)) the chain is on the cytoplasmic side. A helical membrane pass occupies residues 423–443 (AFLVLPFLPASNLLFYVGFVM). Topologically, residues 444–446 (AER) are extracellular. The chain crosses the membrane as a helical span at residues 447–467 (VLYLPSVGYCLLFGLGFGHLW). Over 468 to 473 (QRVNSS) the chain is Cytoplasmic. A helical membrane pass occupies residues 474-493 (WRSRLMLLCGLALLLGVHGV). Residues 494-859 (RTFRRNLDWR…RMNVHKHENE (366 aa)) lie on the Extracellular side of the membrane. TPR repeat units follow at residues 518–551 (PKAL…RPTM), 552–585 (ADAH…RPQL), 586–620 (AVAY…EGSG), 632–665 (YTCY…LPLL), 671–704 (AVLH…QPEQ), 705–739 (GAAY…APLE), 740–773 (PSSH…APQD), 774–807 (YTLQ…QPMA), and 808–841 (AHAH…QPGH). A glycan (N-linked (GlcNAc...) asparagine) is linked at asparagine 567. A glycan (N-linked (GlcNAc...) asparagine) is linked at asparagine 718.

It belongs to the TMTC family.

Its subcellular location is the membrane. It localises to the endoplasmic reticulum. It catalyses the reaction a di-trans,poly-cis-dolichyl beta-D-mannosyl phosphate + L-seryl-[protein] = 3-O-(alpha-D-mannosyl)-L-seryl-[protein] + a di-trans,poly-cis-dolichyl phosphate + H(+). The enzyme catalyses a di-trans,poly-cis-dolichyl beta-D-mannosyl phosphate + L-threonyl-[protein] = 3-O-(alpha-D-mannosyl)-L-threonyl-[protein] + a di-trans,poly-cis-dolichyl phosphate + H(+). It participates in protein modification; protein glycosylation. Functionally, transfers mannosyl residues to the hydroxyl group of serine or threonine residues. The chain is Protein O-mannosyl-transferase Tmtc1 from Drosophila melanogaster (Fruit fly).